A 427-amino-acid chain; its full sequence is MPSIVIVGAQWGDEGKGKIIDYLAQEADVVIRAQGGNNAGHTVMVEDKKYSFHLLPSGVLFEDKLNIIGNGVVFDPEGFLQEIEVLKKEGINTSNIKIDERVHVIFPYHKRIDQLEEEARGEAQIGTTKKGIGPCYMDKIQRSGIRLGEMIDEEDFKDRLYKQVDDKNKIIEKIYEAEGFEKEAMYETYLKYAREIKKYVTDTTILAHEALKAKKKVLFEGAQGTLLDIDLGTYPYVTSSHPTAGGFPIGAGIGPNQIEQVLGIVKAYTTRVGSGTFPTELDNEVGDKIRIKGNEFGTTTGRPRRCGWFDGVMVRYTTRINGLTAMSLMLLDVLSGFDTLKICTGYELEGEMVAHFPANIKTLGKCKPIYEELPGWEEDITNMKTYEELPENAKKYIERIESYVGVPIKMISVGPKRNQTIIRERLF.

GTP is bound by residues Gly-12–Lys-18 and Gly-40–Thr-42. The Proton acceptor role is filled by Asp-13. The Mg(2+) site is built by Asp-13 and Gly-40. Residues Asp-13 to Lys-16, Asn-38 to His-41, Thr-128, Arg-142, Gln-223, Thr-238, and Arg-302 each bind IMP. The active-site Proton donor is His-41. Thr-298–Arg-304 provides a ligand contact to substrate. Residues Arg-304, Leu-330–Asp-332, and Ser-412–Gly-414 contribute to the GTP site.

It belongs to the adenylosuccinate synthetase family. Homodimer. The cofactor is Mg(2+).

The protein resides in the cytoplasm. It catalyses the reaction IMP + L-aspartate + GTP = N(6)-(1,2-dicarboxyethyl)-AMP + GDP + phosphate + 2 H(+). Its pathway is purine metabolism; AMP biosynthesis via de novo pathway; AMP from IMP: step 1/2. Its function is as follows. Plays an important role in the de novo pathway of purine nucleotide biosynthesis. Catalyzes the first committed step in the biosynthesis of AMP from IMP. In Alkaliphilus metalliredigens (strain QYMF), this protein is Adenylosuccinate synthetase.